We begin with the raw amino-acid sequence, 476 residues long: Protein transport protein Sec61 subunit alpha (476 aa).

Topologically, residues 2 to 33 (GIKFLEFIKPFCAVLPEIQKPERKIQFREKVL) are cytoplasmic. The helical transmembrane segment at 34–53 (WTAITLFIFLVCCQIPLFGI) threads the bilayer. Topologically, residues 54–76 (MSSDSADPFYWMRVILASNRGTL) are lumenal. Residues 77–96 (MELGIAPIVTSGLIMQLLAG) traverse the membrane as a helical segment. Topologically, residues 97–117 (AKIIEVGDTPKDRALFNGAQK) are cytoplasmic. A helical membrane pass occupies residues 118–138 (LFGMIITIGQAIVYVMTGMYG). Over 139-144 (DPSEMG) the chain is Lumenal. A helical membrane pass occupies residues 145–165 (AGICLLIIIQLFVAGLIVLLL). Over 166 to 172 (DELLQKG) the chain is Cytoplasmic. A helical membrane pass occupies residues 173-193 (YGLGSGISLFIATNICETIVW). At 194–240 (KAFGPTTVNTGRGTEFEGAIIALFHLLATRTDKVRALREAFYRQNLP) the chain is on the lumenal side. A helical transmembrane segment spans residues 241–261 (NLMNLIATVFVFAVVIYFQGF). Topologically, residues 262-288 (RVDLPIKSARYRGQYNTYPIKLFYTSN) are cytoplasmic. A helical transmembrane segment spans residues 289–309 (IPIILQSALVSNLYVISQMLS). The Lumenal segment spans residues 310 to 354 (TRFSGNFLVNLLGTWSDATTSGPARAYPVAGLCYYLSPPESFGSV). The chain crosses the membrane as a helical span at residues 355-375 (LDDPVHAVIYIVFMLGSCAFF). Over 376–420 (SKTWIEVSGSSAKDVAKQLKEQQMVMRGHRETSMVHELNRYIPTA) the chain is Cytoplasmic. Residues 421-441 (AAFGGLCIGGLSVMADFLGAI) traverse the membrane as a helical segment. Residues 442-445 (GSGT) lie on the Lumenal side of the membrane. The helical transmembrane segment at 446 to 462 (GILLAVTIIYQYFEIFV) threads the bilayer. Topologically, residues 463-476 (KEQSEVGSMGALLF) are cytoplasmic.

It belongs to the SecY/SEC61-alpha family. As to quaternary structure, the SEC61 channel-forming translocon complex consists of channel-forming core components SEC61A1, SEC61B and SEC61G and different auxiliary components such as SEC62 and SEC63. The SEC61 channel associates with the multi-pass translocon (MPT) complex.

Its subcellular location is the endoplasmic reticulum membrane. Component of SEC61 channel-forming translocon complex that mediates transport of signal peptide-containing precursor polypeptides across the endoplasmic reticulum (ER). Forms a ribosome receptor and a gated pore in the ER membrane, both functions required for cotranslational translocation of nascent polypeptides. May cooperate with auxiliary protein SEC62, SEC63 and HSPA5/BiP to enable post-translational transport of small presecretory proteins. The SEC61 channel is also involved in ER membrane insertion of transmembrane proteins: it mediates membrane insertion of the first few transmembrane segments of proteins, while insertion of subsequent transmembrane regions of multi-pass membrane proteins is mediated by the multi-pass translocon (MPT) complex. In Bovichtus variegatus (Thornfish), this protein is Protein transport protein Sec61 subunit alpha (sec61a).